The primary structure comprises 381 residues: Succinyl-diaminopimelate desuccinylase (381 aa).

His-70 lines the Zn(2+) pocket. The active site involves Asp-72. Asp-103 lines the Zn(2+) pocket. The active-site Proton acceptor is Glu-136. Glu-137, Glu-165, and His-354 together coordinate Zn(2+).

This sequence belongs to the peptidase M20A family. DapE subfamily. As to quaternary structure, homodimer. Requires Zn(2+) as cofactor. Co(2+) is required as a cofactor.

It carries out the reaction N-succinyl-(2S,6S)-2,6-diaminopimelate + H2O = (2S,6S)-2,6-diaminopimelate + succinate. Its pathway is amino-acid biosynthesis; L-lysine biosynthesis via DAP pathway; LL-2,6-diaminopimelate from (S)-tetrahydrodipicolinate (succinylase route): step 3/3. In terms of biological role, catalyzes the hydrolysis of N-succinyl-L,L-diaminopimelic acid (SDAP), forming succinate and LL-2,6-diaminopimelate (DAP), an intermediate involved in the bacterial biosynthesis of lysine and meso-diaminopimelic acid, an essential component of bacterial cell walls. In Roseobacter denitrificans (strain ATCC 33942 / OCh 114) (Erythrobacter sp. (strain OCh 114)), this protein is Succinyl-diaminopimelate desuccinylase.